Reading from the N-terminus, the 313-residue chain is 2,3-dihydroxyphenylpropionate/2,3-dihydroxicinnamic acid 1,2-dioxygenase (313 aa).

The Proton donor role is filled by histidine 115. Residue histidine 179 is the Proton acceptor of the active site.

This sequence belongs to the LigB/MhpB extradiol dioxygenase family. As to quaternary structure, homotetramer. Requires Fe(2+) as cofactor.

It carries out the reaction 3-(2,3-dihydroxyphenyl)propanoate + O2 = (2Z,4E)-2-hydroxy-6-oxonona-2,4-dienedioate + H(+). The enzyme catalyses (2E)-3-(2,3-dihydroxyphenyl)prop-2-enoate + O2 = (2Z,4E,7E)-2-hydroxy-6-oxonona-2,4,7-trienedioate + H(+). It participates in aromatic compound metabolism; 3-phenylpropanoate degradation. In terms of biological role, catalyzes the non-heme iron(II)-dependent oxidative cleavage of 2,3-dihydroxyphenylpropionic acid and 2,3-dihydroxicinnamic acid into 2-hydroxy-6-ketononadienedioate and 2-hydroxy-6-ketononatrienedioate, respectively. The polypeptide is 2,3-dihydroxyphenylpropionate/2,3-dihydroxicinnamic acid 1,2-dioxygenase (Mycobacterium ulcerans (strain Agy99)).